The primary structure comprises 63 residues: Cecropin-A2 (63 aa).

The N-terminal stretch at methionine 1–alanine 23 is a signal peptide. At arginine 62 the chain carries Arginine amide.

This sequence belongs to the cecropin family. In terms of tissue distribution, strongly expressed in larval, pupal and adult fat body and hemocytes after injection of bacteria. Maximal expression in the adult involves fat body cells of the head, thorax and abdomen.

The protein resides in the secreted. Cecropins have lytic and antibacterial activity against several Gram-positive and Gram-negative bacteria. The chain is Cecropin-A2 from Drosophila melanogaster (Fruit fly).